The primary structure comprises 91 residues: Proline, histidine and glycine-rich protein 1 (91 aa).

A disordered region spans residues 1 to 91 (MHPGGKGHCG…HCGPHPGPHH (91 aa)). Composition is skewed to gly residues over residues 33–42 (HPGHGPGHCP), 49–63 (GHGG…GHCP), and 70–82 (GHGG…GPGH).

In Mus musculus (Mouse), this protein is Proline, histidine and glycine-rich protein 1 (Phgr1).